A 331-amino-acid chain; its full sequence is Glyceraldehyde-3-phosphate dehydrogenase, cytosolic (331 aa).

NAD(+) is bound by residues 12 to 13, aspartate 34, and arginine 78; that span reads RI. D-glyceraldehyde 3-phosphate-binding positions include 149–151, threonine 180, 209–210, and arginine 232; these read SCT and TG. The active-site Nucleophile is cysteine 150. Asparagine 314 lines the NAD(+) pocket.

This sequence belongs to the glyceraldehyde-3-phosphate dehydrogenase family. Homotetramer.

The protein resides in the cytoplasm. The enzyme catalyses D-glyceraldehyde 3-phosphate + phosphate + NAD(+) = (2R)-3-phospho-glyceroyl phosphate + NADH + H(+). The protein operates within carbohydrate degradation; glycolysis; pyruvate from D-glyceraldehyde 3-phosphate: step 1/5. The chain is Glyceraldehyde-3-phosphate dehydrogenase, cytosolic from Trypanosoma brucei brucei.